We begin with the raw amino-acid sequence, 353 residues long: UPF0283 membrane protein YcjF (353 aa).

The span at 1–19 (MSEPLKPRIDFAEPLKEEP) shows a compositional bias: basic and acidic residues. The disordered stretch occupies residues 1-35 (MSEPLKPRIDFAEPLKEEPTSAFKAQQTFSEAESR). 3 helical membrane passes run 70 to 90 (MVMG…VQWT), 100 to 120 (VALG…GSVV), and 213 to 233 (ESTL…FIAW).

It belongs to the UPF0283 family.

It is found in the cell inner membrane. The chain is UPF0283 membrane protein YcjF from Salmonella newport (strain SL254).